The following is a 354-amino-acid chain: Phosphate acyltransferase (354 aa).

Belongs to the PlsX family. In terms of assembly, homodimer. Probably interacts with PlsY.

Its subcellular location is the cytoplasm. It catalyses the reaction a fatty acyl-[ACP] + phosphate = an acyl phosphate + holo-[ACP]. The protein operates within lipid metabolism; phospholipid metabolism. Functionally, catalyzes the reversible formation of acyl-phosphate (acyl-PO(4)) from acyl-[acyl-carrier-protein] (acyl-ACP). This enzyme utilizes acyl-ACP as fatty acyl donor, but not acyl-CoA. The sequence is that of Phosphate acyltransferase from Nitrobacter hamburgensis (strain DSM 10229 / NCIMB 13809 / X14).